The chain runs to 347 residues: NADH-quinone oxidoreductase subunit H (347 aa).

8 consecutive transmembrane segments (helical) span residues 25 to 45 (ILFM…VAAM), 95 to 115 (FMFT…FAII), 128 to 148 (IGIL…LFGG), 168 to 188 (ISYE…TGSF), 200 to 220 (GWYI…GVAV), 251 to 271 (FFIG…CLFF), 284 to 304 (FIPP…MFVL), and 324 to 344 (VCLP…LIFS).

This sequence belongs to the complex I subunit 1 family. As to quaternary structure, NDH-1 is composed of 14 different subunits. Subunits NuoA, H, J, K, L, M, N constitute the membrane sector of the complex.

It is found in the cell inner membrane. The enzyme catalyses a quinone + NADH + 5 H(+)(in) = a quinol + NAD(+) + 4 H(+)(out). Its function is as follows. NDH-1 shuttles electrons from NADH, via FMN and iron-sulfur (Fe-S) centers, to quinones in the respiratory chain. The immediate electron acceptor for the enzyme in this species is believed to be ubiquinone. Couples the redox reaction to proton translocation (for every two electrons transferred, four hydrogen ions are translocated across the cytoplasmic membrane), and thus conserves the redox energy in a proton gradient. This subunit may bind ubiquinone. The sequence is that of NADH-quinone oxidoreductase subunit H from Psychrobacter cryohalolentis (strain ATCC BAA-1226 / DSM 17306 / VKM B-2378 / K5).